Consider the following 253-residue polypeptide: Trypsin delta (253 aa).

Residues 1–22 form the signal peptide; that stretch reads MLKFVILLSAVACALGGTVPEG. A propeptide spans 23-30 (activation peptide); the sequence is LLPQLDGR. Residues 31–253 enclose the Peptidase S1 domain; that stretch reads IVGGSATTIS…ALRSWVISNA (223 aa). A disulfide bridge links Cys-56 with Cys-72. Catalysis depends on charge relay system residues His-71 and Asp-116. 2 disulfides stabilise this stretch: Cys-180–Cys-197 and Cys-206–Cys-230. Ser-210 (charge relay system) is an active-site residue.

It belongs to the peptidase S1 family.

It localises to the secreted. The protein resides in the extracellular space. The catalysed reaction is Preferential cleavage: Arg-|-Xaa, Lys-|-Xaa.. The protein is Trypsin delta of Drosophila melanogaster (Fruit fly).